The sequence spans 199 residues: dITP/XTP pyrophosphatase (199 aa).

T7–K12 provides a ligand contact to substrate. Residues E41 and D70 each coordinate Mg(2+). The active-site Proton acceptor is D70. Substrate-binding positions include S71, F154–D157, K177, and H182–R183.

This sequence belongs to the HAM1 NTPase family. In terms of assembly, homodimer. Mg(2+) is required as a cofactor.

It carries out the reaction XTP + H2O = XMP + diphosphate + H(+). The enzyme catalyses dITP + H2O = dIMP + diphosphate + H(+). It catalyses the reaction ITP + H2O = IMP + diphosphate + H(+). In terms of biological role, pyrophosphatase that catalyzes the hydrolysis of nucleoside triphosphates to their monophosphate derivatives, with a high preference for the non-canonical purine nucleotides XTP (xanthosine triphosphate), dITP (deoxyinosine triphosphate) and ITP. Seems to function as a house-cleaning enzyme that removes non-canonical purine nucleotides from the nucleotide pool, thus preventing their incorporation into DNA/RNA and avoiding chromosomal lesions. This is dITP/XTP pyrophosphatase from Protochlamydia amoebophila (strain UWE25).